Reading from the N-terminus, the 806-residue chain is Glycerol-3-phosphate acyltransferase (806 aa).

The short motif at 305–310 is the HXXXXD motif element; sequence CHRSHM.

This sequence belongs to the GPAT/DAPAT family.

It is found in the cell inner membrane. It carries out the reaction sn-glycerol 3-phosphate + an acyl-CoA = a 1-acyl-sn-glycero-3-phosphate + CoA. It functions in the pathway phospholipid metabolism; CDP-diacylglycerol biosynthesis; CDP-diacylglycerol from sn-glycerol 3-phosphate: step 1/3. This Salmonella arizonae (strain ATCC BAA-731 / CDC346-86 / RSK2980) protein is Glycerol-3-phosphate acyltransferase.